Reading from the N-terminus, the 750-residue chain is Olfactomedin-like protein 2B (750 aa).

A signal peptide spans 1-22 (MAKPRLLVLYFALIVVPAWVSS). Coiled coils occupy residues 40 to 68 (AEDE…KVKA) and 179 to 213 (KLEE…GKEN). 2 N-linked (GlcNAc...) asparagine glycosylation sites follow: N187 and N213. 2 disordered regions span residues 346-437 (TRRP…PPAV) and 452-484 (VPPT…PEEE). Composition is skewed to polar residues over residues 354-384 (QGHS…SDPS) and 393-413 (PTLQ…LQPS). Over residues 416–430 (VPATTVAHTATQQPA) the composition is skewed to low complexity. The Olfactomedin-like domain maps to 493–750 (RCKDTLSTIT…QVTYHVIFAY (258 aa)). Cysteines 494 and 680 form a disulfide. N-linked (GlcNAc...) asparagine glycosylation occurs at N695.

Homodimer. Binds to heparin and chondroitin sulfate E. O-glycosylated and N-glycosylated.

It is found in the secreted. The sequence is that of Olfactomedin-like protein 2B (OLFML2B) from Homo sapiens (Human).